Consider the following 609-residue polypeptide: Alpha-glucosides permease MPH2 (609 aa).

Over 1 to 106 (MKNLSFLINR…AAAWSLLVST (106 aa)) the chain is Cytoplasmic. Residues 107–127 (TLIMEGYDTAILGAFYALPIF) form a helical membrane-spanning segment. Residues 128–142 (QRKFGSQNDKTGEWE) lie on the Extracellular side of the membrane. The helical transmembrane segment at 143–163 (ISASWQIGLTLCYMAGEIVGL) threads the bilayer. Topologically, residues 164-178 (QLTGPSVDLVGNRYT) are cytoplasmic. Residues 179–199 (LIIALFFLAAFTFILYFCNSL) traverse the membrane as a helical segment. Position 200 (G200) is a topological domain, extracellular. A helical membrane pass occupies residues 201–221 (MIAVGQALCGMPWGCFQCLTV). Topologically, residues 222 to 234 (SYASEICPLALRY) are cytoplasmic. The helical transmembrane segment at 235–255 (YLTTYSNLCWLFGQLFAAGIM) threads the bilayer. The Extracellular segment spans residues 256-270 (KNSQKKYADSELGYK). A helical transmembrane segment spans residues 271-291 (LPFALQWILPVPLALGIFFAP). The Cytoplasmic segment spans residues 292–363 (ESPWWLVKKG…EDKINRRRTR (72 aa)). The chain crosses the membrane as a helical span at residues 364–384 (ITCLCWAGQATCGSILIGYST). The Extracellular portion of the chain corresponds to 385–397 (YFYEKAGVSTEMS). The chain crosses the membrane as a helical span at residues 398–418 (FTFSIIQYCLGICATFLSWWA). At 419–426 (SKYFGRYD) the chain is on the cytoplasmic side. A helical transmembrane segment spans residues 427–447 (LYAFGLAFQTIVFFIIGGLGC). Residues 448–459 (SSTHGSKMGSGS) are Extracellular-facing. A helical membrane pass occupies residues 460–480 (LLMAVAFFYNLGIAPVVFCLV). Residues 481 to 492 (SEMPSSRLRTKT) are Cytoplasmic-facing. Residues 493 to 513 (IILARNTYNVVSIICSVLILY) traverse the membrane as a helical segment. At 514-525 (QLNSKKWNWGAK) the chain is on the extracellular side. The chain crosses the membrane as a helical span at residues 526–546 (SGFFWGVLCFCTLIWAVVDLP). The Cytoplasmic portion of the chain corresponds to 547–609 (ETAGKTFVEI…QRNSNVSHHL (63 aa)).

This sequence belongs to the major facilitator superfamily. Sugar transporter (TC 2.A.1.1) family.

The protein localises to the cell membrane. Functionally, high-affinity uptake of maltose and maltotriose. Also transports alpha-methylglucoside, glucose and turanose but not melezitose or trehalose. This is Alpha-glucosides permease MPH2 (MPH2) from Saccharomyces cerevisiae (strain ATCC 204508 / S288c) (Baker's yeast).